The following is a 609-amino-acid chain: Elongation factor 4 (609 aa).

Positions 11–193 (SRIRNFSIIA…QIVEKVPAPS (183 aa)) constitute a tr-type G domain. GTP-binding positions include 23–28 (DHGKST) and 140–143 (NKID).

The protein belongs to the TRAFAC class translation factor GTPase superfamily. Classic translation factor GTPase family. LepA subfamily.

The protein localises to the cell membrane. The catalysed reaction is GTP + H2O = GDP + phosphate + H(+). In terms of biological role, required for accurate and efficient protein synthesis under certain stress conditions. May act as a fidelity factor of the translation reaction, by catalyzing a one-codon backward translocation of tRNAs on improperly translocated ribosomes. Back-translocation proceeds from a post-translocation (POST) complex to a pre-translocation (PRE) complex, thus giving elongation factor G a second chance to translocate the tRNAs correctly. Binds to ribosomes in a GTP-dependent manner. This is Elongation factor 4 from Halalkalibacterium halodurans (strain ATCC BAA-125 / DSM 18197 / FERM 7344 / JCM 9153 / C-125) (Bacillus halodurans).